The primary structure comprises 832 residues: Mucosa-associated lymphoid tissue lymphoma translocation protein 1 homolog (832 aa).

The interval 1-39 (MSLWGQPLQASPPLAVRQPPTASSGPSTSPPAGATLNRL) is disordered. At serine 2 the chain carries N-acetylserine. Residues 19–39 (PPTASSGPSTSPPAGATLNRL) are compositionally biased toward low complexity. The 88-residue stretch at 45 to 132 (RRLSESLDRA…EVLPLLNPPG (88 aa)) folds into the Death domain. Ig-like C2-type domains are found at residues 131–207 (PGLK…FEFS) and 218–314 (AEVT…KKAE). Residue serine 141 is modified to Phosphoserine. 2 disulfides stabilise this stretch: cysteine 154/cysteine 196 and cysteine 257/cysteine 299. The caspase-like stretch occupies residues 356–570 (IGNMSYWEHP…SLSEKRALTD (215 aa)). The Nuclear export signal motif lies at 377-384 (LTNLLRQL). Active-site residues include histidine 423 and cysteine 472.

Belongs to the peptidase C14B family. As to quaternary structure, homooligomer; forms oligomers which bind to TRAF6. Forms a complex with CARD14 and MALT1; resulting in the formation of a CBM (CARD14-BCL10-MALT1) complex. Forms a complex with CARD11 and MALT1; resulting in the formation of a CBM (CARD11-BCL10-MALT1) complex. Forms a complex with CARD9 and MALT1; resulting in the formation of a CBM (CARD9-BCL10-MALT1) complex.

Its subcellular location is the cytoplasm. The protein localises to the perinuclear region. It is found in the nucleus. Its function is as follows. Protease that enhances BCL10-induced activation: acts via formation of CBM complexes that channel adaptive and innate immune signaling downstream of CARD domain-containing proteins (CARD9, CARD11 and CARD14) to activate NF-kappa-B and MAP kinase p38 pathways which stimulate expression of genes encoding pro-inflammatory cytokines and chemokines. Mediates BCL10 cleavage: MALT1-dependent BCL10 cleavage plays an important role in T-cell antigen receptor-induced integrin adhesion. Involved in the induction of T helper 17 cells (Th17) differentiation. Cleaves RC3H1 and ZC3H12A in response to T-cell receptor (TCR) stimulation which releases their cooperatively repressed targets to promote Th17 cell differentiation. Also mediates cleavage of N4BP1 in T-cells following TCR-mediated activation, leading to N4BP1 inactivation. May also have ubiquitin ligase activity: binds to TRAF6, inducing TRAF6 oligomerization and activation of its ligase activity. The sequence is that of Mucosa-associated lymphoid tissue lymphoma translocation protein 1 homolog from Mus musculus (Mouse).